A 268-amino-acid polypeptide reads, in one-letter code: Protein CDV3 homolog (268 aa).

The segment covering 40 to 50 (KREVVKPKKPE) has biased composition (basic and acidic residues). 2 disordered regions span residues 40 to 145 (KREV…ERVG) and 184 to 268 (QQAG…DEAS). Over residues 51-61 (AAAGGVAVVGE) the composition is skewed to low complexity. Acidic residues predominate over residues 76–85 (VEEEWKEFEE). The span at 98-107 (QLSTITAQES) shows a compositional bias: polar residues. The span at 123 to 132 (NYDEDDEDSN) shows a compositional bias: acidic residues. The segment covering 221–239 (RPEEQRKKKNEPAFEEVRH) has biased composition (basic and acidic residues).

This sequence belongs to the CDV3 family.

The polypeptide is Protein CDV3 homolog (Drosophila yakuba (Fruit fly)).